We begin with the raw amino-acid sequence, 169 residues long: Large ribosomal subunit protein uL10 (169 aa).

This sequence belongs to the universal ribosomal protein uL10 family. Part of the ribosomal stalk of the 50S ribosomal subunit. The N-terminus interacts with L11 and the large rRNA to form the base of the stalk. The C-terminus forms an elongated spine to which L12 dimers bind in a sequential fashion forming a multimeric L10(L12)X complex.

In terms of biological role, forms part of the ribosomal stalk, playing a central role in the interaction of the ribosome with GTP-bound translation factors. This Rickettsia africae (strain ESF-5) protein is Large ribosomal subunit protein uL10.